Reading from the N-terminus, the 213-residue chain is Uridine kinase (213 aa).

15 to 22 (GASASGKS) serves as a coordination point for ATP.

This sequence belongs to the uridine kinase family.

It is found in the cytoplasm. The enzyme catalyses uridine + ATP = UMP + ADP + H(+). The catalysed reaction is cytidine + ATP = CMP + ADP + H(+). Its pathway is pyrimidine metabolism; CTP biosynthesis via salvage pathway; CTP from cytidine: step 1/3. It participates in pyrimidine metabolism; UMP biosynthesis via salvage pathway; UMP from uridine: step 1/1. The protein is Uridine kinase of Pectobacterium carotovorum subsp. carotovorum (strain PC1).